A 544-amino-acid polypeptide reads, in one-letter code: Chaperonin GroEL (544 aa).

Residues 29–32 (TLGP), 86–90 (DGTTT), glycine 413, 476–478 (NAA), and aspartate 492 contribute to the ATP site.

The protein belongs to the chaperonin (HSP60) family. In terms of assembly, forms a cylinder of 14 subunits composed of two heptameric rings stacked back-to-back. Interacts with the co-chaperonin GroES.

The protein localises to the cytoplasm. It catalyses the reaction ATP + H2O + a folded polypeptide = ADP + phosphate + an unfolded polypeptide.. Functionally, together with its co-chaperonin GroES, plays an essential role in assisting protein folding. The GroEL-GroES system forms a nano-cage that allows encapsulation of the non-native substrate proteins and provides a physical environment optimized to promote and accelerate protein folding. In Halalkalibacterium halodurans (strain ATCC BAA-125 / DSM 18197 / FERM 7344 / JCM 9153 / C-125) (Bacillus halodurans), this protein is Chaperonin GroEL.